The following is a 124-amino-acid chain: Aspartate 1-decarboxylase (124 aa).

Ser-25 (schiff-base intermediate with substrate; via pyruvic acid) is an active-site residue. Ser-25 carries the post-translational modification Pyruvic acid (Ser). Thr-57 contributes to the substrate binding site. The active-site Proton donor is the Tyr-58. Position 73–75 (73–75 (GAA)) interacts with substrate.

This sequence belongs to the PanD family. As to quaternary structure, heterooctamer of four alpha and four beta subunits. The cofactor is pyruvate. Post-translationally, is synthesized initially as an inactive proenzyme, which is activated by self-cleavage at a specific serine bond to produce a beta-subunit with a hydroxyl group at its C-terminus and an alpha-subunit with a pyruvoyl group at its N-terminus.

It is found in the cytoplasm. It carries out the reaction L-aspartate + H(+) = beta-alanine + CO2. It participates in cofactor biosynthesis; (R)-pantothenate biosynthesis; beta-alanine from L-aspartate: step 1/1. Catalyzes the pyruvoyl-dependent decarboxylation of aspartate to produce beta-alanine. This Clostridium beijerinckii (strain ATCC 51743 / NCIMB 8052) (Clostridium acetobutylicum) protein is Aspartate 1-decarboxylase.